A 1053-amino-acid chain; its full sequence is Ubiquitin-like modifier-activating enzyme 6 (1053 aa).

N-acetylmethionine is present on methionine 1. ATP is bound at residue arginine 46. At threonine 54 the chain carries Phosphothreonine. 2 residues coordinate ATP: alanine 470 and aspartate 497. Residues aspartate 499 and glutamate 502 each coordinate Mg(2+). ATP-binding residues include asparagine 505, arginine 508, glutamine 509, and lysine 521. Position 544 is an N6-acetyllysine (lysine 544). Valine 545 lines the ATP pocket. Aspartate 569 contacts Mg(2+). Residue asparagine 570 coordinates ATP. Cysteine 625 (glycyl thioester intermediate) is an active-site residue. Residue lysine 729 is modified to N6-acetyllysine. The residue at position 737 (serine 737) is a Phosphoserine.

Belongs to the ubiquitin-activating E1 family. Forms a thioester with UBD in cells stimulated with tumor necrosis factor-alpha (TNFa) and interferon-gamma (IFNg).

It carries out the reaction ATP + ubiquitin + [E1 ubiquitin-activating enzyme]-L-cysteine = AMP + diphosphate + S-ubiquitinyl-[E1 ubiquitin-activating enzyme]-L-cysteine.. It functions in the pathway protein modification; protein ubiquitination. Functionally, activates ubiquitin by first adenylating its C-terminal glycine residue with ATP, and thereafter linking this residue to the side chain of a cysteine residue in E1, yielding a ubiquitin-E1 thioester and free AMP. Specific for ubiquitin, does not activate ubiquitin-like peptides. Also activates UBD/FAT10 conjugation via adenylation of its C-terminal glycine. Differs from UBE1 in its specificity for substrate E2 charging. Does not charge cell cycle E2s, such as CDC34. Essential for embryonic development. In Mus musculus (Mouse), this protein is Ubiquitin-like modifier-activating enzyme 6 (Uba6).